The primary structure comprises 175 residues: Translation initiation factor IF-3 (175 aa).

This sequence belongs to the IF-3 family. Monomer.

The protein resides in the cytoplasm. Its function is as follows. IF-3 binds to the 30S ribosomal subunit and shifts the equilibrium between 70S ribosomes and their 50S and 30S subunits in favor of the free subunits, thus enhancing the availability of 30S subunits on which protein synthesis initiation begins. This is Translation initiation factor IF-3 from Blochmanniella floridana.